Here is a 373-residue protein sequence, read N- to C-terminus: P2Y purinoceptor 2 (373 aa).

Over 1–32 (MAADLEPWNSTINGTWEGDELGYKCRFNEDFK) the chain is Extracellular. N-linked (GlcNAc...) asparagine glycosylation is found at Asn9 and Asn13. Residues 33-59 (YVLLPVSYGVVCVLGLCLNVVALYIFL) form a helical membrane-spanning segment. The Cytoplasmic segment spans residues 60-70 (CRLKTWNASTT). A helical membrane pass occupies residues 71–93 (YMFHLAVSDSLYAASLPLLVYYY). The Extracellular portion of the chain corresponds to 94 to 110 (ARGDHWPFSTVLCKLVR). A disulfide bridge connects residues Cys106 and Cys183. Residues 111–129 (FLFYTNLYCSILFLTCISV) traverse the membrane as a helical segment. Residues 130-152 (HRCLGVLRPLHSLRWGRARYARR) lie on the Cytoplasmic side of the membrane. The helical transmembrane segment at 153-172 (VAAVVWVLVLACQAPVLYFV) threads the bilayer. At 173 to 194 (TTSVRGTRITCHDTSARELFSH) the chain is on the extracellular side. The chain crosses the membrane as a helical span at residues 195 to 220 (FVAYSSVMLGLLFAVPFSVILVCYVL). The Cytoplasmic segment spans residues 221–246 (MARRLLKPAYGTTGGLPRAKRKSVRT). A helical transmembrane segment spans residues 247-269 (IALVLAVFALCFLPFHVTRTLYY). Residues 270 to 287 (SFRSLDLSCHTLNAINMA) are Extracellular-facing. Residues 288-309 (YKITRPLASANSCLDPVLYFLA) traverse the membrane as a helical segment. The Cytoplasmic portion of the chain corresponds to 310 to 373 (GQRLVRFARD…AGSETKDIRL (64 aa)). The tract at residues 318–373 (RDAKPPTEPTPSPQARRKLGLHRPNRTVRKDLSVSSDDSRRTESTPAGSETKDIRL) is disordered. Residues 332–344 (ARRKLGLHRPNRT) show a composition bias toward basic residues. The segment covering 345 to 360 (VRKDLSVSSDDSRRTE) has biased composition (basic and acidic residues).

The protein belongs to the G-protein coupled receptor 1 family. Spleen, testis, kidney, liver, lung, heart and brain.

It is found in the cell membrane. Receptor for ATP and UTP coupled to G-proteins that activate a phosphatidylinositol-calcium second messenger system. The affinity range is UTP = ATP &gt; ATP-gamma-S &gt;&gt; 2-methylthio-ATP = ADP. The chain is P2Y purinoceptor 2 (P2ry2) from Mus musculus (Mouse).